We begin with the raw amino-acid sequence, 219 residues long: Thiopurine S-methyltransferase (219 aa).

Tryptophan 10, leucine 45, glutamate 66, and arginine 123 together coordinate S-adenosyl-L-methionine.

Belongs to the class I-like SAM-binding methyltransferase superfamily. TPMT family.

It localises to the cytoplasm. The catalysed reaction is S-adenosyl-L-methionine + a thiopurine = S-adenosyl-L-homocysteine + a thiopurine S-methylether.. The polypeptide is Thiopurine S-methyltransferase (Shewanella pealeana (strain ATCC 700345 / ANG-SQ1)).